A 108-amino-acid polypeptide reads, in one-letter code: Nucleoid-associated protein HEAR1046 (108 aa).

The interval 86-108 is disordered; the sequence is TSQEKMAGATAGMPMPPGFKMPF. The span at 99–108 shows a compositional bias: pro residues; sequence PMPPGFKMPF.

It belongs to the YbaB/EbfC family. In terms of assembly, homodimer.

It localises to the cytoplasm. The protein localises to the nucleoid. Functionally, binds to DNA and alters its conformation. May be involved in regulation of gene expression, nucleoid organization and DNA protection. This chain is Nucleoid-associated protein HEAR1046, found in Herminiimonas arsenicoxydans.